The following is a 449-amino-acid chain: Secretin receptor (449 aa).

Residues 1–25 (MLSTMRPRLSLLLLRLLLLTKAAHT) form the signal peptide. At 26–141 (VGVPPRLCDV…NERRHAYLLK (116 aa)) the chain is on the extracellular side. Cystine bridges form between C46/C75, C66/C107, and C89/C123. Residues N72, N100, N106, and N128 are each glycosylated (N-linked (GlcNAc...) asparagine). A helical transmembrane segment spans residues 142 to 167 (LKVMYTVGYSSSLAMLLVALSILCSF). Residues 168-174 (RRLHCTR) lie on the Cytoplasmic side of the membrane. The chain crosses the membrane as a helical span at residues 175 to 195 (NYIHMHLFVSFILRALSNFIK). Residues 196–216 (DAVLFSSDDVTYCDAHKVGCK) lie on the Extracellular side of the membrane. A disulfide bridge links C215 with C285. Residues 217–239 (LVMIFFQYCIMANYAWLLVEGLY) form a helical membrane-spanning segment. Topologically, residues 240 to 254 (LHTLLAISFFSERKY) are cytoplasmic. Residues 255–276 (LQAFVLLGWGSPAIFVALWAIT) traverse the membrane as a helical segment. Residues 277-291 (RHFLENTGCWDINAN) are Extracellular-facing. An N-linked (GlcNAc...) asparagine glycan is attached at N291. Residues 292–315 (ASVWWVIRGPVILSILINFIFFIN) traverse the membrane as a helical segment. Over 316–340 (ILRILMRKLRTQETRGSETNHYKRL) the chain is Cytoplasmic. Residues 341–356 (AKSTLLLIPLFGIHYI) form a helical membrane-spanning segment. The Extracellular portion of the chain corresponds to 357–367 (VFAFSPEDAME). The helical transmembrane segment at 368-391 (VQLFFELALGSFQGLVVAVLYCFL) threads the bilayer. The Cytoplasmic segment spans residues 392–449 (NGEVQLEVQKKWRQWHLQEFPLRPVAFNNSFSNATNGPTHSTKASTEQSRSIPRASII). Over residues 425-442 (ATNGPTHSTKASTEQSRS) the composition is skewed to polar residues. The segment at 425–449 (ATNGPTHSTKASTEQSRSIPRASII) is disordered.

Belongs to the G-protein coupled receptor 2 family. Phosphorylated on Ser and Thr residues at the cytoplasmic C-terminus by G protein-coupled receptor kinases (GRKs). In terms of processing, N-glycosylated. In terms of tissue distribution, in the brain, expressed in the central amygdala, hippocampus, area postrema, nucleus of the tractus solitary and cerebellum.

The protein localises to the cell membrane. The protein resides in the basolateral cell membrane. Its function is as follows. G protein-coupled receptor activated by secretin (SCT), which is involved in different processes such as regulation of the pH of the duodenal content, food intake and water homeostasis. Ligand binding causes a conformation change that triggers signaling via guanine nucleotide-binding proteins (G proteins) and activates cAMP-dependent pathway. Upon binding to secretin, regulates the pH of the duodenum by (1) inhibiting the secretion of gastric acid from the parietal cells of the stomach and (2) stimulating the production of bicarbonate (NaHCO(3)) from the ductal cells of the pancreas. In addition to regulating the pH of the duodenal content, plays a central role in diet induced thermogenesis: acts as a non-sympathetic brown fat (BAT) activator mediating prandial thermogenesis, which consequentially induces satiation. Mechanistically, secretin released by the gut after a meal binds to secretin receptor (SCTR) in brown adipocytes, activating brown fat thermogenesis by stimulating lipolysis, which is sensed in the brain and promotes satiation. Also able to stimulate lipolysis in white adipocytes. Also plays an important role in cellular osmoregulation by regulating renal water reabsorption. Also plays a role in the central nervous system: required for synaptic plasticity. This Rattus norvegicus (Rat) protein is Secretin receptor.